The sequence spans 317 residues: Acetyl-coenzyme A carboxylase carboxyl transferase subunit alpha (317 aa).

Residues 40–293 (LEVRVREAIL…GDVIANALAE (254 aa)) form the CoA carboxyltransferase C-terminal domain.

It belongs to the AccA family. In terms of assembly, acetyl-CoA carboxylase is a heterohexamer composed of biotin carboxyl carrier protein (AccB), biotin carboxylase (AccC) and two subunits each of ACCase subunit alpha (AccA) and ACCase subunit beta (AccD).

It localises to the cytoplasm. It catalyses the reaction N(6)-carboxybiotinyl-L-lysyl-[protein] + acetyl-CoA = N(6)-biotinyl-L-lysyl-[protein] + malonyl-CoA. It functions in the pathway lipid metabolism; malonyl-CoA biosynthesis; malonyl-CoA from acetyl-CoA: step 1/1. In terms of biological role, component of the acetyl coenzyme A carboxylase (ACC) complex. First, biotin carboxylase catalyzes the carboxylation of biotin on its carrier protein (BCCP) and then the CO(2) group is transferred by the carboxyltransferase to acetyl-CoA to form malonyl-CoA. The chain is Acetyl-coenzyme A carboxylase carboxyl transferase subunit alpha from Rhizobium etli (strain CIAT 652).